Here is a 301-residue protein sequence, read N- to C-terminus: Ribosomal RNA small subunit methyltransferase A (301 aa).

S-adenosyl-L-methionine contacts are provided by Asn-18, Leu-20, Gly-45, Glu-66, Asp-91, and Asn-112. Residues 267–301 (PPEAAPVKEKRRMAKNKMTEPANNNLNENSAPEVD) form a disordered region. Residues 287-301 (PANNNLNENSAPEVD) show a composition bias toward polar residues.

Belongs to the class I-like SAM-binding methyltransferase superfamily. rRNA adenine N(6)-methyltransferase family. RsmA subfamily.

It is found in the cytoplasm. The catalysed reaction is adenosine(1518)/adenosine(1519) in 16S rRNA + 4 S-adenosyl-L-methionine = N(6)-dimethyladenosine(1518)/N(6)-dimethyladenosine(1519) in 16S rRNA + 4 S-adenosyl-L-homocysteine + 4 H(+). Its function is as follows. Specifically dimethylates two adjacent adenosines (A1518 and A1519) in the loop of a conserved hairpin near the 3'-end of 16S rRNA in the 30S particle. May play a critical role in biogenesis of 30S subunits. The sequence is that of Ribosomal RNA small subunit methyltransferase A from Colwellia psychrerythraea (strain 34H / ATCC BAA-681) (Vibrio psychroerythus).